A 131-amino-acid polypeptide reads, in one-letter code: Small ribosomal subunit protein bS16 (131 aa).

Basic and acidic residues predominate over residues 87–117 (IGKSKQEELRKSEAKTSAKNKKANEEKANEE). The tract at residues 87–131 (IGKSKQEELRKSEAKTSAKNKKANEEKANEEKVEESETLEASSEA) is disordered.

This sequence belongs to the bacterial ribosomal protein bS16 family.

This Prochlorococcus marinus (strain SARG / CCMP1375 / SS120) protein is Small ribosomal subunit protein bS16.